A 481-amino-acid chain; its full sequence is Cysteine--tRNA ligase (481 aa).

C29 contacts Zn(2+). Residues 31 to 41 carry the 'HIGH' region motif; the sequence is VTVYDYCHIGH. Zn(2+)-binding residues include C209, H234, and E238. The 'KMSKS' region motif lies at 266 to 270; sequence KMSKS. K269 contacts ATP.

This sequence belongs to the class-I aminoacyl-tRNA synthetase family. In terms of assembly, monomer. The cofactor is Zn(2+).

The protein resides in the cytoplasm. The enzyme catalyses tRNA(Cys) + L-cysteine + ATP = L-cysteinyl-tRNA(Cys) + AMP + diphosphate. This chain is Cysteine--tRNA ligase, found in Syntrophotalea carbinolica (strain DSM 2380 / NBRC 103641 / GraBd1) (Pelobacter carbinolicus).